A 163-amino-acid polypeptide reads, in one-letter code: Glyoxalase domain-containing protein 5 (163 aa).

Residues 41-161 (HLDHLVLTVR…DDNLIEVSNY (121 aa)) form the VOC domain.

It belongs to the glyoxalase I family.

This Danio rerio (Zebrafish) protein is Glyoxalase domain-containing protein 5 (glod5).